Here is a 462-residue protein sequence, read N- to C-terminus: Glycine--tRNA ligase (462 aa).

Residues Arg-94 and Glu-143 each coordinate substrate. ATP contacts are provided by residues 175-177 (RNE), 185-190 (FRTCEF), 259-260 (EL), and 308-311 (GLTR). 190-194 (FEQME) is a substrate binding site. 304–308 (ETSAG) is a binding site for substrate.

Belongs to the class-II aminoacyl-tRNA synthetase family. In terms of assembly, homodimer.

It is found in the cytoplasm. It carries out the reaction tRNA(Gly) + glycine + ATP = glycyl-tRNA(Gly) + AMP + diphosphate. Functionally, catalyzes the attachment of glycine to tRNA(Gly). The polypeptide is Glycine--tRNA ligase (Treponema pallidum (strain Nichols)).